The chain runs to 184 residues: Thylakoid membrane protein slr0575 (184 aa).

Helical transmembrane passes span 5 to 25 and 31 to 51; these read ISLA…GFVA and ATLN…GLAL.

The protein localises to the cellular thylakoid membrane. This Synechocystis sp. (strain ATCC 27184 / PCC 6803 / Kazusa) protein is Thylakoid membrane protein slr0575.